We begin with the raw amino-acid sequence, 579 residues long: Copine-E (579 aa).

C2 domains follow at residues 45–175 and 183–304; these read IDPS…KVIG and QTGT…EFTL. Positions 80, 86, 145, 147, and 153 each coordinate Ca(2+). One can recognise a VWFA domain in the interval 345–552; that stretch reads NLMIAIDCTA…KKYENDPEQL (208 aa).

Belongs to the copine family. Requires Ca(2+) as cofactor.

This is Copine-E (cpnE) from Dictyostelium discoideum (Social amoeba).